The sequence spans 436 residues: Enolase (436 aa).

Gln167 is a binding site for (2R)-2-phosphoglycerate. The Proton donor role is filled by Glu209. Mg(2+) contacts are provided by Asp246, Glu291, and Asp318. 4 residues coordinate (2R)-2-phosphoglycerate: Lys343, Arg372, Ser373, and Lys394. The Proton acceptor role is filled by Lys343.

The protein belongs to the enolase family. In terms of assembly, component of the RNA degradosome, a multiprotein complex involved in RNA processing and mRNA degradation. Requires Mg(2+) as cofactor.

The protein resides in the cytoplasm. It is found in the secreted. It localises to the cell surface. The catalysed reaction is (2R)-2-phosphoglycerate = phosphoenolpyruvate + H2O. It participates in carbohydrate degradation; glycolysis; pyruvate from D-glyceraldehyde 3-phosphate: step 4/5. Functionally, catalyzes the reversible conversion of 2-phosphoglycerate (2-PG) into phosphoenolpyruvate (PEP). It is essential for the degradation of carbohydrates via glycolysis. The chain is Enolase from Actinobacillus pleuropneumoniae serotype 5b (strain L20).